The sequence spans 361 residues: Protein RecA (361 aa).

Residue 77-84 coordinates ATP; the sequence is GPESSGKT.

This sequence belongs to the RecA family.

The protein resides in the cytoplasm. Its function is as follows. Can catalyze the hydrolysis of ATP in the presence of single-stranded DNA, the ATP-dependent uptake of single-stranded DNA by duplex DNA, and the ATP-dependent hybridization of homologous single-stranded DNAs. It interacts with LexA causing its activation and leading to its autocatalytic cleavage. In Brucella suis (strain ATCC 23445 / NCTC 10510), this protein is Protein RecA.